Here is a 223-residue protein sequence, read N- to C-terminus: Deoxyribose-phosphate aldolase (223 aa).

Asp92 (proton donor/acceptor) is an active-site residue. The active-site Schiff-base intermediate with acetaldehyde is Lys153. Lys182 (proton donor/acceptor) is an active-site residue.

The protein belongs to the DeoC/FbaB aldolase family. DeoC type 1 subfamily.

It is found in the cytoplasm. The catalysed reaction is 2-deoxy-D-ribose 5-phosphate = D-glyceraldehyde 3-phosphate + acetaldehyde. The protein operates within carbohydrate degradation; 2-deoxy-D-ribose 1-phosphate degradation; D-glyceraldehyde 3-phosphate and acetaldehyde from 2-deoxy-alpha-D-ribose 1-phosphate: step 2/2. In terms of biological role, catalyzes a reversible aldol reaction between acetaldehyde and D-glyceraldehyde 3-phosphate to generate 2-deoxy-D-ribose 5-phosphate. The protein is Deoxyribose-phosphate aldolase of Mycoplasmoides gallisepticum (strain R(low / passage 15 / clone 2)) (Mycoplasma gallisepticum).